A 337-amino-acid polypeptide reads, in one-letter code: tRNA N6-adenosine threonylcarbamoyltransferase (337 aa).

Residues His-107 and His-111 each contribute to the Fe cation site. Substrate is bound by residues 129-133, Asp-162, Gly-175, and Asn-271; that span reads LISGG. Asp-299 provides a ligand contact to Fe cation.

This sequence belongs to the KAE1 / TsaD family. It depends on Fe(2+) as a cofactor.

The protein resides in the cytoplasm. It catalyses the reaction L-threonylcarbamoyladenylate + adenosine(37) in tRNA = N(6)-L-threonylcarbamoyladenosine(37) in tRNA + AMP + H(+). Its function is as follows. Required for the formation of a threonylcarbamoyl group on adenosine at position 37 (t(6)A37) in tRNAs that read codons beginning with adenine. Is involved in the transfer of the threonylcarbamoyl moiety of threonylcarbamoyl-AMP (TC-AMP) to the N6 group of A37, together with TsaE and TsaB. TsaD likely plays a direct catalytic role in this reaction. The chain is tRNA N6-adenosine threonylcarbamoyltransferase from Sulfurovum sp. (strain NBC37-1).